The following is a 373-amino-acid chain: Peptide chain release factor 2 (373 aa).

At Gln-251 the chain carries N5-methylglutamine.

It belongs to the prokaryotic/mitochondrial release factor family. Post-translationally, methylated by PrmC. Methylation increases the termination efficiency of RF2.

It localises to the cytoplasm. In terms of biological role, peptide chain release factor 2 directs the termination of translation in response to the peptide chain termination codons UGA and UAA. The sequence is that of Peptide chain release factor 2 from Salinispora arenicola (strain CNS-205).